Consider the following 251-residue polypeptide: Ubiquinone/menaquinone biosynthesis C-methyltransferase UbiE (251 aa).

S-adenosyl-L-methionine-binding positions include Thr-74, Asp-95, and 123–124 (NA).

It belongs to the class I-like SAM-binding methyltransferase superfamily. MenG/UbiE family.

The enzyme catalyses a 2-demethylmenaquinol + S-adenosyl-L-methionine = a menaquinol + S-adenosyl-L-homocysteine + H(+). It carries out the reaction a 2-methoxy-6-(all-trans-polyprenyl)benzene-1,4-diol + S-adenosyl-L-methionine = a 5-methoxy-2-methyl-3-(all-trans-polyprenyl)benzene-1,4-diol + S-adenosyl-L-homocysteine + H(+). It functions in the pathway quinol/quinone metabolism; menaquinone biosynthesis; menaquinol from 1,4-dihydroxy-2-naphthoate: step 2/2. Its pathway is cofactor biosynthesis; ubiquinone biosynthesis. Methyltransferase required for the conversion of demethylmenaquinol (DMKH2) to menaquinol (MKH2) and the conversion of 2-polyprenyl-6-methoxy-1,4-benzoquinol (DDMQH2) to 2-polyprenyl-3-methyl-6-methoxy-1,4-benzoquinol (DMQH2). The chain is Ubiquinone/menaquinone biosynthesis C-methyltransferase UbiE from Shewanella piezotolerans (strain WP3 / JCM 13877).